A 752-amino-acid chain; its full sequence is Probable beta-glucosidase D (752 aa).

The signal sequence occupies residues 1 to 18; the sequence is MRFVSLAVGAALLGAAGA. N-linked (GlcNAc...) asparagine glycosylation is found at Asn-187 and Asn-237. The active site involves Asp-265. 10 N-linked (GlcNAc...) asparagine glycosylation sites follow: Asn-299, Asn-343, Asn-441, Asn-510, Asn-532, Asn-571, Asn-586, Asn-638, Asn-661, and Asn-743.

This sequence belongs to the glycosyl hydrolase 3 family.

Its subcellular location is the secreted. The enzyme catalyses Hydrolysis of terminal, non-reducing beta-D-glucosyl residues with release of beta-D-glucose.. It functions in the pathway glycan metabolism; cellulose degradation. Beta-glucosidases are one of a number of cellulolytic enzymes involved in the degradation of cellulosic biomass. Catalyzes the last step releasing glucose from the inhibitory cellobiose. In Aspergillus oryzae (strain ATCC 42149 / RIB 40) (Yellow koji mold), this protein is Probable beta-glucosidase D (bglD).